A 588-amino-acid polypeptide reads, in one-letter code: Aspartate--tRNA ligase (588 aa).

E172 serves as a coordination point for L-aspartate. The tract at residues 196–199 (QLFK) is aspartate. Residue R218 coordinates L-aspartate. Residues 218–220 (RDE) and Q227 contribute to the ATP site. H449 serves as a coordination point for L-aspartate. Position 483 (E483) interacts with ATP. Residue R490 participates in L-aspartate binding. 535–538 (GLDR) lines the ATP pocket.

Belongs to the class-II aminoacyl-tRNA synthetase family. Type 1 subfamily. Homodimer.

The protein resides in the cytoplasm. It carries out the reaction tRNA(Asp) + L-aspartate + ATP = L-aspartyl-tRNA(Asp) + AMP + diphosphate. Its function is as follows. Catalyzes the attachment of L-aspartate to tRNA(Asp) in a two-step reaction: L-aspartate is first activated by ATP to form Asp-AMP and then transferred to the acceptor end of tRNA(Asp). The polypeptide is Aspartate--tRNA ligase (Haemophilus influenzae (strain PittGG)).